We begin with the raw amino-acid sequence, 410 residues long: Histone-lysine N-methyltransferase SUV39H2 (410 aa).

Residues 47-105 (YEVEYLCDYKVVKDMEYYLVKWKGWPDSTNTWEPLQNLKCPLLLQQFFNDKHNYLSQVK) form the Chromo domain. Positions 189–247 (FGCSCTDCFFEKCCPAEAGVLLAYNKNQQIKIPPGTPIYECNSRCQCGPDCPNRIVQKG) constitute a Pre-SET domain. Residues C191, C193, C196, C201, C202, C229, C233, C235, and C239 each coordinate Zn(2+). Residues 250–373 (YSLCIFRTSN…AGEELTFDYQ (124 aa)) enclose the SET domain. Residues 261–263 (CGW), Y304, and 330–331 (NH) each bind S-adenosyl-L-methionine. C333 serves as a coordination point for Zn(2+). Residues S381, S384, and S388 each carry the phosphoserine modification. In terms of domain architecture, Post-SET spans 394–410 (ARTVCKCGAVTCRGYLN). Residues C398, C400, and C405 each contribute to the Zn(2+) site.

It belongs to the class V-like SAM-binding methyltransferase superfamily. Histone-lysine methyltransferase family. Suvar3-9 subfamily. As to quaternary structure, interacts with SMAD5. The large PER complex involved in the histone methylation is composed of at least PER2, CBX3, TRIM28, SUV39H1 and/or SUV39H2; CBX3 mediates the formation of the complex. Ubiquitinated by the DCX(DCAF13) E3 ubiquitin ligase complex, leading to its degradation.

Its subcellular location is the nucleus. It localises to the chromosome. The protein resides in the centromere. The enzyme catalyses L-lysyl(9)-[histone H3] + 3 S-adenosyl-L-methionine = N(6),N(6),N(6)-trimethyl-L-lysyl(9)-[histone H3] + 3 S-adenosyl-L-homocysteine + 3 H(+). Functionally, histone methyltransferase that specifically trimethylates 'Lys-9' of histone H3 using monomethylated H3 'Lys-9' as substrate. H3 'Lys-9' trimethylation represents a specific tag for epigenetic transcriptional repression by recruiting HP1 (CBX1, CBX3 and/or CBX5) proteins to methylated histones. Mainly functions in heterochromatin regions, thereby playing a central role in the establishment of constitutive heterochromatin at pericentric and telomere regions. H3 'Lys-9' trimethylation is also required to direct DNA methylation at pericentric repeats. SUV39H1 is targeted to histone H3 via its interaction with RB1 and is involved in many processes, such as cell cycle regulation, transcriptional repression and regulation of telomere length. May participate in regulation of higher-order chromatin organization during spermatogenesis. Recruited by the large PER complex to the E-box elements of the circadian target genes such as PER2 itself or PER1, contributes to the conversion of local chromatin to a heterochromatin-like repressive state through H3 'Lys-9' trimethylation. This chain is Histone-lysine N-methyltransferase SUV39H2 (SUV39H2), found in Bos taurus (Bovine).